The primary structure comprises 901 residues: HTH-type transcriptional regulator MalT (901 aa).

39–46 (SPAGYGKT) lines the ATP pocket. Residues 829 to 894 (ELIRTSPLTQ…DAVQHAQQLL (66 aa)) form the HTH luxR-type domain. Positions 853-872 (NEQIAGELAVAATTIKTHIR) form a DNA-binding region, H-T-H motif.

This sequence belongs to the MalT family. As to quaternary structure, monomer in solution. Oligomerizes to an active state in the presence of the positive effectors ATP and maltotriose.

Its activity is regulated as follows. Activated by ATP and maltotriose, which are both required for DNA binding. Positively regulates the transcription of the maltose regulon whose gene products are responsible for uptake and catabolism of malto-oligosaccharides. Specifically binds to the promoter region of its target genes, recognizing a short DNA motif called the MalT box. This is HTH-type transcriptional regulator MalT from Enterobacter sp. (strain 638).